Consider the following 1352-residue polypeptide: Patatin-like phospholipase domain-containing protein 7 (1352 aa).

Over 1–36 the chain is Lumenal; that stretch reads MQNEEDACLEAGYCLGTTLSSWRLHFMEEQSQSTML. Residues 37–57 traverse the membrane as a helical segment; the sequence is MGIGIGALLTLAFVGITFFFV. Residues 58-1352 lie on the Cytoplasmic side of the membrane; the sequence is YRRVRRLRRA…DQGPRLEHPS (1295 aa). 170 to 297 is a binding site for a nucleoside 3',5'-cyclic phosphate; it reads VLGHFEKPLF…VRVVQIIMVR (128 aa). The tract at residues 340–364 is disordered; it reads MSYGPEEQLERSLRPSEFSSSDHGS. A phosphoserine mark is found at Ser341 and Ser379. The tract at residues 384 to 411 is disordered; the sequence is SNHGEVDELRQSQGSGSNTSAFQESHEG. A compositionally biased stretch (polar residues) spans 394-406; that stretch reads QSQGSGSNTSAFQ. A nucleoside 3',5'-cyclic phosphate contacts are provided by residues 499-585 and 613-718; these read FLHV…YEIM and ALDW…LGEK. The interval 681 to 967 is involved in the binding to lipid droplets; the sequence is VHAVRDSELA…RGCAQVGILR (287 aa). The 167-residue stretch at 950-1116 folds into the PNPLA domain; that stretch reads LVLGGGGARG…INNLPADVAR (167 aa). The GXGXXG signature appears at 954 to 959; the sequence is GGGARG. Residues 981–985 carry the GXSXG motif; the sequence is GTSIG. The active-site Nucleophile is the Ser983. Asp1103 serves as the catalytic Proton acceptor. The DGA/G signature appears at 1103 to 1105; it reads DGG. The residue at position 1280 (Ser1280) is a Phosphoserine. A Phosphothreonine modification is found at Thr1284. The tract at residues 1295–1352 is disordered; the sequence is KETYADFQSTGIELDSDSEYEPSMLQGPPSLTSPEQSQDSFPWLPNQDDQGPRLEHPS. Residues 1323 to 1334 show a composition bias toward polar residues; it reads PSLTSPEQSQDS.

Belongs to the NTE family. As to expression, expressed in white and brown adipose tissue, cardiac muscle, skeletal muscle, and testis. In terms of tissue distribution, expressed in white adipose tissue, cardiac muscle, skeletal muscle, and testis.

The protein localises to the endoplasmic reticulum membrane. The protein resides in the lipid droplet. It carries out the reaction a 1-acyl-sn-glycero-3-phosphocholine + H2O = sn-glycerol 3-phosphocholine + a fatty acid + H(+). It catalyses the reaction 1-(9Z-octadecenoyl)-sn-glycero-3-phosphocholine + H2O = sn-glycerol 3-phosphocholine + (9Z)-octadecenoate + H(+). The catalysed reaction is 1-(9Z-octadecenoyl)-sn-glycero-3-phosphoethanolamine + H2O = sn-glycero-3-phosphoethanolamine + (9Z)-octadecenoate + H(+). The enzyme catalyses 1-(9Z-octadecenoyl)-sn-glycero-3-phospho-L-serine + H2O = sn-glycero-3-phospho-L-serine + (9Z)-octadecenoate + H(+). It carries out the reaction 1-hexadecanoyl-sn-glycero-3-phosphocholine + H2O = sn-glycerol 3-phosphocholine + hexadecanoate + H(+). It catalyses the reaction 1-hexadecanoyl-sn-glycero-3-phosphate + H2O = sn-glycerol 3-phosphate + hexadecanoate + H(+). Its activity is regulated as follows. cAMP does not regulate lysophospholipase activity in vitro. Slightly inhibited by organophosphorus (OP) compounds such as mipafox, which is likely why mice are less sensitive to distal axonophathy induced by OPs compared to humans. In terms of biological role, lysophospholipase which preferentially deacylates unsaturated lysophosphatidylcholine (C18:1), generating glycerophosphocholine. Can also deacylate, to a lesser extent, lysophosphatidylethanolamine (C18:1), lysophosphatidyl-L-serine (C18:1) and lysophosphatidic acid (C16:0). Its function is as follows. Lysophospholipase. Lacks lysophospholipase activity. The protein is Patatin-like phospholipase domain-containing protein 7 (Pnpla7) of Mus musculus (Mouse).